Consider the following 72-residue polypeptide: MAGLSIWHVVIFAIVVILLFGTSKLKNIGKDVGGAVRDFKKSVREEDEAASLNSPRTIDAQVKTSESTSVKS.

The chain crosses the membrane as a helical span at residues 1 to 21 (MAGLSIWHVVIFAIVVILLFG). The segment at 47–72 (DEAASLNSPRTIDAQVKTSESTSVKS) is disordered. A compositionally biased stretch (polar residues) spans 51 to 72 (SLNSPRTIDAQVKTSESTSVKS).

This sequence belongs to the TatA/E family. In terms of assembly, the Tat system comprises two distinct complexes: a TatABC complex, containing multiple copies of TatA, TatB and TatC subunits, and a separate TatA complex, containing only TatA subunits. Substrates initially bind to the TatABC complex, which probably triggers association of the separate TatA complex to form the active translocon.

The protein localises to the cell inner membrane. Functionally, part of the twin-arginine translocation (Tat) system that transports large folded proteins containing a characteristic twin-arginine motif in their signal peptide across membranes. TatA could form the protein-conducting channel of the Tat system. The sequence is that of Sec-independent protein translocase protein TatA from Acinetobacter baumannii (strain AB307-0294).